A 365-amino-acid polypeptide reads, in one-letter code: tRNA-specific 2-thiouridylase MnmA (365 aa).

ATP is bound by residues 9–16 (AMSGGVDS) and Met-35. The active-site Nucleophile is Cys-105. A disulfide bond links Cys-105 and Cys-203. An ATP-binding site is contributed by Gly-129. An interaction with tRNA region spans residues 153 to 155 (KDQ). Residue Cys-203 is the Cysteine persulfide intermediate of the active site. Residues 308 to 309 (RY) form an interaction with tRNA region.

This sequence belongs to the MnmA/TRMU family.

It is found in the cytoplasm. It carries out the reaction S-sulfanyl-L-cysteinyl-[protein] + uridine(34) in tRNA + AH2 + ATP = 2-thiouridine(34) in tRNA + L-cysteinyl-[protein] + A + AMP + diphosphate + H(+). Catalyzes the 2-thiolation of uridine at the wobble position (U34) of tRNA, leading to the formation of s(2)U34. This chain is tRNA-specific 2-thiouridylase MnmA, found in Pelotomaculum thermopropionicum (strain DSM 13744 / JCM 10971 / SI).